The following is a 427-amino-acid chain: MDAFRLAPCGPLRGRLRVPGDKSVTHRGLMLLALAEGEGRLFYPLKAGDTLSTARVLQALGAEVREEGPHFLVRGRGLRFQEPEDVLDCGNAGTLMRLLLGLLAGQEGLFAVLTGDASLRRRPMGRVVAPLRAMGARVDGREEGERAPLAVRGAPLRGLRYTLPVPSAQVKSALLLAGLFAEGVTEVEEPTPTRDHTERLFRHFGLPLEVEGRKVRTWRTGPFPAKDLVVPGDFSSAAFFLVAALVTPGSEVVVEGVGLNPTRTGLLTVLKAMGADLEWQVLEGEAGEPVGWVRARHSLLKGVAVDPGLIPLMVDEVPVLAAAAAWAEGETYIPGLSELRVKESDRVRAIAENLRALGVEVEEGPDWLRIRGGGVRPGRVRPFHDHRIAMAFAVAGLPVGVEVEEPHWAEISYPGFFQDLLRLCAAS.

Residues Lys-22, Ser-23, and Arg-27 each contribute to the 3-phosphoshikimate site. Lys-22 provides a ligand contact to phosphoenolpyruvate. Residues Gly-93 and Arg-122 each contribute to the phosphoenolpyruvate site. Ser-167, Gln-169, Asp-315, and Lys-342 together coordinate 3-phosphoshikimate. Gln-169 provides a ligand contact to phosphoenolpyruvate. The active-site Proton acceptor is Asp-315. Residues Arg-346 and Arg-387 each coordinate phosphoenolpyruvate.

It belongs to the EPSP synthase family. In terms of assembly, monomer.

It is found in the cytoplasm. The enzyme catalyses 3-phosphoshikimate + phosphoenolpyruvate = 5-O-(1-carboxyvinyl)-3-phosphoshikimate + phosphate. The protein operates within metabolic intermediate biosynthesis; chorismate biosynthesis; chorismate from D-erythrose 4-phosphate and phosphoenolpyruvate: step 6/7. Functionally, catalyzes the transfer of the enolpyruvyl moiety of phosphoenolpyruvate (PEP) to the 5-hydroxyl of shikimate-3-phosphate (S3P) to produce enolpyruvyl shikimate-3-phosphate and inorganic phosphate. This is 3-phosphoshikimate 1-carboxyvinyltransferase from Thermus thermophilus (strain ATCC 27634 / DSM 579 / HB8).